Consider the following 235-residue polypeptide: Lipoprotein-releasing system ATP-binding protein LolD (235 aa).

An ABC transporter domain is found at 7–234 (LQCTNLSKRY…QQELTLMGAR (228 aa)). 43–50 (GSSGSGKS) serves as a coordination point for ATP.

It belongs to the ABC transporter superfamily. Lipoprotein translocase (TC 3.A.1.125) family. In terms of assembly, the complex is composed of two ATP-binding proteins (LolD) and two transmembrane proteins (LolC and LolE).

It localises to the cell inner membrane. In terms of biological role, part of the ABC transporter complex LolCDE involved in the translocation of mature outer membrane-directed lipoproteins, from the inner membrane to the periplasmic chaperone, LolA. Responsible for the formation of the LolA-lipoprotein complex in an ATP-dependent manner. This chain is Lipoprotein-releasing system ATP-binding protein LolD, found in Pectobacterium atrosepticum (strain SCRI 1043 / ATCC BAA-672) (Erwinia carotovora subsp. atroseptica).